A 240-amino-acid polypeptide reads, in one-letter code: Triosephosphate isomerase (240 aa).

A substrate-binding site is contributed by 8–10; that stretch reads NWK. Histidine 93 acts as the Electrophile in catalysis. Catalysis depends on glutamate 160, which acts as the Proton acceptor. Glycine 166 lines the substrate pocket.

The protein belongs to the triosephosphate isomerase family. As to quaternary structure, homodimer.

Its subcellular location is the cytoplasm. The catalysed reaction is D-glyceraldehyde 3-phosphate = dihydroxyacetone phosphate. The protein operates within carbohydrate biosynthesis; gluconeogenesis. Its pathway is carbohydrate degradation; glycolysis; D-glyceraldehyde 3-phosphate from glycerone phosphate: step 1/1. Involved in the gluconeogenesis. Catalyzes stereospecifically the conversion of dihydroxyacetone phosphate (DHAP) to D-glyceraldehyde-3-phosphate (G3P). The protein is Triosephosphate isomerase of Ehrlichia chaffeensis (strain ATCC CRL-10679 / Arkansas).